A 198-amino-acid chain; its full sequence is Holliday junction branch migration complex subunit RuvA (198 aa).

Residues 1-63 (MIALLTGQIA…EDAIQLYGFR (63 aa)) form a domain I region. Residues 64–142 (TSLEKSFFQL…KLDLSSVVVP (79 aa)) are domain II. A flexible linker region spans residues 143–153 (EPRQMPEDDLL). A domain III region spans residues 153–198 (LEDVVSALLNLGYKEPQVRKVLAGLNPGSDASLEGVLKQALKSLMR).

The protein belongs to the RuvA family. In terms of assembly, homotetramer. Forms an RuvA(8)-RuvB(12)-Holliday junction (HJ) complex. HJ DNA is sandwiched between 2 RuvA tetramers; dsDNA enters through RuvA and exits via RuvB. An RuvB hexamer assembles on each DNA strand where it exits the tetramer. Each RuvB hexamer is contacted by two RuvA subunits (via domain III) on 2 adjacent RuvB subunits; this complex drives branch migration. In the full resolvosome a probable DNA-RuvA(4)-RuvB(12)-RuvC(2) complex forms which resolves the HJ.

Its subcellular location is the cytoplasm. The RuvA-RuvB-RuvC complex processes Holliday junction (HJ) DNA during genetic recombination and DNA repair, while the RuvA-RuvB complex plays an important role in the rescue of blocked DNA replication forks via replication fork reversal (RFR). RuvA specifically binds to HJ cruciform DNA, conferring on it an open structure. The RuvB hexamer acts as an ATP-dependent pump, pulling dsDNA into and through the RuvAB complex. HJ branch migration allows RuvC to scan DNA until it finds its consensus sequence, where it cleaves and resolves the cruciform DNA. The chain is Holliday junction branch migration complex subunit RuvA from Pelobacter propionicus (strain DSM 2379 / NBRC 103807 / OttBd1).